A 636-amino-acid polypeptide reads, in one-letter code: Sodium-dependent proline transporter (636 aa).

Residues 1–45 (MKKLQGAHLRKPVTPDLLMTPSDQGDVDLDVDFAAHRGNWTGKLD) are Cytoplasmic-facing. Thr-20 is subject to Phosphothreonine. Phosphoserine is present on Ser-22. The next 3 helical transmembrane spans lie at 46–66 (FLLSCIGYCVGLGNVWRFPYR), 74–93 (AFLVPYFLMLAICGIPLFFL), and 117–137 (GAGAAMLLIVGLVAIYYNMII). The Extracellular portion of the chain corresponds to 138–214 (AYVLFYLFAS…QGIGSPGEIR (77 aa)). Asn-182 carries an N-linked (GlcNAc...) asparagine glycan. 9 helical membrane-spanning segments follow: residues 215 to 233 (WNLCLCLLLAWVIVFLCIL), 242 to 259 (VVYFTATFPYLILLMLLV), 295 to 312 (IFYSLGVGFGGLLTFASY), 324 to 345 (FIVTLGNAITSILAGFAIFSVL), 378 to 397 (LPLSPFWSFLFFFMLLTLGL), 425 to 443 (VFSGLICVAMYLMGLILTT), 459 to 479 (SFGLMVVVITTCLAVTRVYGI), 500 to 519 (ACWLFLSPATLLALMVYSIV), and 538 to 556 (LGILMGLLSCLMIPAGMLV). At 557–636 (AVLREEGSLW…EIAEEEESMM (80 aa)) the chain is on the cytoplasmic side. 2 positions are modified to phosphoserine: Ser-573 and Ser-582. Residue Thr-588 is modified to Phosphothreonine. At Tyr-591 the chain carries Phosphotyrosine. Ser-598 and Ser-600 each carry phosphoserine.

This sequence belongs to the sodium:neurotransmitter symporter (SNF) (TC 2.A.22) family. SLC6A7 subfamily. As to expression, brain specific (at protein level). Highly expressed in hippocampus, corpus striatum and temporal cortex. Also expressed in frontal cortex, occipital cortex and, at lower levels, in cerebellum and parietal cortex (at protein level).

It is found in the synaptic cell membrane. It catalyses the reaction L-proline(out) + chloride(out) + 2 Na(+)(out) = L-proline(in) + chloride(in) + 2 Na(+)(in). It carries out the reaction L-pipecolate(out) + chloride(out) + 2 Na(+)(out) = L-pipecolate(in) + chloride(in) + 2 Na(+)(in). Its function is as follows. Brain specific sodium (and chloride)-dependent proline transporter. Terminates the action of proline by its high affinity sodium-dependent reuptake into presynaptic terminals. The protein is Sodium-dependent proline transporter of Homo sapiens (Human).